The primary structure comprises 347 residues: Protein RecA (347 aa).

ATP is bound at residue 65 to 72; it reads GPESSGKT.

Belongs to the RecA family.

Its subcellular location is the cytoplasm. In terms of biological role, can catalyze the hydrolysis of ATP in the presence of single-stranded DNA, the ATP-dependent uptake of single-stranded DNA by duplex DNA, and the ATP-dependent hybridization of homologous single-stranded DNAs. It interacts with LexA causing its activation and leading to its autocatalytic cleavage. The sequence is that of Protein RecA from Stutzerimonas stutzeri (Pseudomonas stutzeri).